Consider the following 388-residue polypeptide: Na(+)/H(+) antiporter NhaA (388 aa).

12 helical membrane-spanning segments follow: residues phenylalanine 8 to isoleucine 28, proline 33 to leucine 53, leucine 59 to valine 79, leucine 95 to phenylalanine 115, glycine 125 to serine 145, valine 154 to phenylalanine 174, valine 179 to tryptophan 199, valine 217 to isoleucine 237, valine 259 to valine 279, isoleucine 287 to phenylalanine 307, isoleucine 328 to leucine 348, and leucine 363 to valine 383.

Belongs to the NhaA Na(+)/H(+) (TC 2.A.33) antiporter family.

It is found in the cell inner membrane. The enzyme catalyses Na(+)(in) + 2 H(+)(out) = Na(+)(out) + 2 H(+)(in). Na(+)/H(+) antiporter that extrudes sodium in exchange for external protons. The sequence is that of Na(+)/H(+) antiporter NhaA from Photorhabdus laumondii subsp. laumondii (strain DSM 15139 / CIP 105565 / TT01) (Photorhabdus luminescens subsp. laumondii).